We begin with the raw amino-acid sequence, 327 residues long: MTATKQHKKVILVGDGAVGSSYAFALVTQNIAQELGIIDIFKEKTQGDAEDLSHALAFTSPKKIYAADYADCHDADLVVLTAGAPQKPGETRLDLVEKNLRINKEVVTQIVASGFKGIFLVAANPVDILTYSTWKFSGFPKERVIGSGTSLDSARFRQALAAKIGVDARSVHAYIMGEHGDSEFAVWSHANVAGVGLYDWLQANRDVDEQGLVDLFISVRDAAYSIINKKGATFYGIAVALARITKAILDDENAVLPLSVFQEGQYEGVEDCYIGQPAIVGAYGIVRPVNIPLNDAELQKMQASANQLKTIIDEAFSKEEFASAAKN.

NAD(+)-binding positions include valine 18, aspartate 39, lysine 44, tyrosine 69, and 83–84 (GA). Residues glutamine 86, arginine 92, and 124 to 127 (NPVD) each bind substrate. Residues 122 to 124 (AAN) and serine 147 each bind NAD(+). 152–155 (DSAR) provides a ligand contact to substrate. Beta-D-fructose 1,6-bisphosphate is bound by residues arginine 157 and histidine 172. Histidine 179 serves as the catalytic Proton acceptor. Tyrosine 224 is modified (phosphotyrosine). Threonine 233 serves as a coordination point for substrate.

It belongs to the LDH/MDH superfamily. LDH family. In terms of assembly, homotetramer.

Its subcellular location is the cytoplasm. The enzyme catalyses (S)-lactate + NAD(+) = pyruvate + NADH + H(+). It functions in the pathway fermentation; pyruvate fermentation to lactate; (S)-lactate from pyruvate: step 1/1. Allosterically activated by fructose 1,6-bisphosphate (FBP). Catalyzes the conversion of lactate to pyruvate. This Streptococcus equi subsp. equi (strain 4047) protein is L-lactate dehydrogenase.